The primary structure comprises 302 residues: Segregation and condensation protein A (302 aa).

It belongs to the ScpA family. Component of a cohesin-like complex composed of ScpA, ScpB and the Smc homodimer, in which ScpA and ScpB bind to the head domain of Smc. The presence of the three proteins is required for the association of the complex with DNA.

It is found in the cytoplasm. Its function is as follows. Participates in chromosomal partition during cell division. May act via the formation of a condensin-like complex containing Smc and ScpB that pull DNA away from mid-cell into both cell halves. The protein is Segregation and condensation protein A of Xylella fastidiosa (strain Temecula1 / ATCC 700964).